Here is a 205-residue protein sequence, read N- to C-terminus: Large ribosomal subunit protein uL4 (205 aa).

Residues 56–76 (VSGTTAKPYRQKHTGRARQGS) are disordered.

Belongs to the universal ribosomal protein uL4 family. As to quaternary structure, part of the 50S ribosomal subunit.

Its function is as follows. One of the primary rRNA binding proteins, this protein initially binds near the 5'-end of the 23S rRNA. It is important during the early stages of 50S assembly. It makes multiple contacts with different domains of the 23S rRNA in the assembled 50S subunit and ribosome. Functionally, forms part of the polypeptide exit tunnel. The protein is Large ribosomal subunit protein uL4 of Ehrlichia ruminantium (strain Welgevonden).